Reading from the N-terminus, the 226-residue chain is uncharacterized protein (226 aa).

The N-acetyltransferase domain occupies 75–226 (YTIRNVTKDD…KGWLRMVKRI (152 aa)).

Belongs to the acetyltransferase family.

This is an uncharacterized protein from Methanocaldococcus jannaschii (strain ATCC 43067 / DSM 2661 / JAL-1 / JCM 10045 / NBRC 100440) (Methanococcus jannaschii).